Reading from the N-terminus, the 340-residue chain is MAITVYYDKDCDLNLIKSKKVAIIGFGSQGHAHAMNLRDNGVNVTIGLREGSVSAVKAKNAGFEVMSVSEASKTADVVMILAPDEIQADIFNIEIKPNLSEGKAIAFAHGFNIHYGQIVAPKGIDVIMIAPKAPGHTVRNEFTLGGGTPCLIAIHQDESKNAKNLALSYASAIGGGRTGIIETTFKAETETDLFGEQAVLCGGLSALIQAGFETLVEAGYEPEMAYFECLHEMKLIVDLIYQGGIADMRYSISNTAEYGDYITGPKIITEETKKAMKGVLKDIQNGVFAKDFILERRAGFARMHAERKNMNDSLIEKTGRNLRAMMPWISAKKLVDKDKN.

One can recognise a KARI N-terminal Rossmann domain in the interval 1–183; that stretch reads MAITVYYDKD…GGGRTGIIET (183 aa). NADP(+) contacts are provided by residues 26-29, R49, S52, S54, and 84-87; these read FGSQ and DEIQ. H109 is a catalytic residue. Position 135 (G135) interacts with NADP(+). The 146-residue stretch at 184–329 folds into the KARI C-terminal knotted domain; the sequence is TFKAETETDL…RNLRAMMPWI (146 aa). Mg(2+) contacts are provided by D192, E196, E228, and E232. Position 253 (S253) interacts with substrate.

The protein belongs to the ketol-acid reductoisomerase family. It depends on Mg(2+) as a cofactor.

It carries out the reaction (2R)-2,3-dihydroxy-3-methylbutanoate + NADP(+) = (2S)-2-acetolactate + NADPH + H(+). It catalyses the reaction (2R,3R)-2,3-dihydroxy-3-methylpentanoate + NADP(+) = (S)-2-ethyl-2-hydroxy-3-oxobutanoate + NADPH + H(+). It functions in the pathway amino-acid biosynthesis; L-isoleucine biosynthesis; L-isoleucine from 2-oxobutanoate: step 2/4. Its pathway is amino-acid biosynthesis; L-valine biosynthesis; L-valine from pyruvate: step 2/4. Its function is as follows. Involved in the biosynthesis of branched-chain amino acids (BCAA). Catalyzes an alkyl-migration followed by a ketol-acid reduction of (S)-2-acetolactate (S2AL) to yield (R)-2,3-dihydroxy-isovalerate. In the isomerase reaction, S2AL is rearranged via a Mg-dependent methyl migration to produce 3-hydroxy-3-methyl-2-ketobutyrate (HMKB). In the reductase reaction, this 2-ketoacid undergoes a metal-dependent reduction by NADPH to yield (R)-2,3-dihydroxy-isovalerate. The chain is Ketol-acid reductoisomerase (NADP(+)) from Campylobacter jejuni subsp. jejuni serotype O:6 (strain 81116 / NCTC 11828).